Consider the following 345-residue polypeptide: N-acetyl-gamma-glutamyl-phosphate reductase (345 aa).

The active site involves Cys-149.

This sequence belongs to the NAGSA dehydrogenase family. Type 1 subfamily.

Its subcellular location is the cytoplasm. The catalysed reaction is N-acetyl-L-glutamate 5-semialdehyde + phosphate + NADP(+) = N-acetyl-L-glutamyl 5-phosphate + NADPH + H(+). It participates in amino-acid biosynthesis; L-arginine biosynthesis; N(2)-acetyl-L-ornithine from L-glutamate: step 3/4. Functionally, catalyzes the NADPH-dependent reduction of N-acetyl-5-glutamyl phosphate to yield N-acetyl-L-glutamate 5-semialdehyde. This Desulforapulum autotrophicum (strain ATCC 43914 / DSM 3382 / VKM B-1955 / HRM2) (Desulfobacterium autotrophicum) protein is N-acetyl-gamma-glutamyl-phosphate reductase.